The following is a 302-amino-acid chain: Sulfate adenylyltransferase subunit 2 (302 aa).

The segment at 279–302 (ERQGRAIDHDSSGSMELKKRQGYF) is disordered. Basic and acidic residues predominate over residues 280–302 (RQGRAIDHDSSGSMELKKRQGYF).

Belongs to the PAPS reductase family. CysD subfamily. In terms of assembly, heterodimer composed of CysD, the smaller subunit, and CysN.

It carries out the reaction sulfate + ATP + H(+) = adenosine 5'-phosphosulfate + diphosphate. The protein operates within sulfur metabolism; hydrogen sulfide biosynthesis; sulfite from sulfate: step 1/3. Functionally, with CysN forms the ATP sulfurylase (ATPS) that catalyzes the adenylation of sulfate producing adenosine 5'-phosphosulfate (APS) and diphosphate, the first enzymatic step in sulfur assimilation pathway. APS synthesis involves the formation of a high-energy phosphoric-sulfuric acid anhydride bond driven by GTP hydrolysis by CysN coupled to ATP hydrolysis by CysD. The sequence is that of Sulfate adenylyltransferase subunit 2 from Aliivibrio fischeri (strain ATCC 700601 / ES114) (Vibrio fischeri).